A 772-amino-acid polypeptide reads, in one-letter code: Cellulosomal-scaffolding protein B (772 aa).

The region spanning 1–80 (DPSKSFDSAI…TTFVAGGVNL (80 aa)) is the Cohesin 1 domain. A linker (Pro/Thr-rich) region spans residues 81-93 (GSSVPTTQPNVPS). The Cohesin 2 domain occupies 94 to 240 (DGVVVEIGKV…VNVGNATPTK (147 aa)). The segment covering 235–276 (NATPTKGATPTNTATPTKSATATPPGHSVPTNTPTNTPANTP) has biased composition (low complexity). Disordered stretches follow at residues 235-277 (NATP…NTPV) and 438-464 (VVPSTQPVTTPPATTKPPATTIPPSDD). The tract at residues 241-272 (GATPTNTATPTKSATATPPGHSVPTNTPTNTP) is linker (Pro/Thr-rich). The region spanning 277–435 (VSGNLKVEFY…GVLVWGKEPG (159 aa)) is the CBM3 domain. Positions 438-461 (VVPSTQPVTTPPATTKPPATTIPP) are enriched in low complexity. The linker (Pro/Thr-rich) stretch occupies residues 440–461 (PSTQPVTTPPATTKPPATTIPP). Residues 462 to 607 (SDDPNAIKIK…ETDLINGGVL (146 aa)) form the Cohesin 3 domain. Positions 704-771 (IMMWVGDIVK…FGATSSDYDA (68 aa)) constitute a Dockerin domain.

O-glycosylated on most but not all Thr residues of the linker units.

It localises to the secreted. Acts as a scaffolding protein in the cellulosome. It promotes binding of cellulose to the catalytic domains of the cellulolytic enzymes probably through the binding of the nine repeated domains with dockerin domains present in catalytic subunits of the cellulosome. The chain is Cellulosomal-scaffolding protein B (cipB) from Acetivibrio thermocellus (Hungateiclostridium thermocellum).